Here is a 169-residue protein sequence, read N- to C-terminus: Lachrymatory-factor synthase (169 aa).

A propeptide spanning residues 1–12 is cleaved from the precursor; sequence MELNPGAPAVVA. Residues glutamate 88 and tyrosine 102 each act as proton donor/acceptor in the active site.

It localises to the vacuole. It catalyses the reaction (E)-prop-1-en-1-SO-peroxol = (Z)-propanethial S-oxide. The catalysed reaction is (E)-alk-1-en-1-SO-peroxol = (Z)-alkanethial oxide. Produces lacrymatory factor (propanthial S-oxide) from 1-propenylsulphenic acid, an unstable compound resulting from the degradation of trans-1-propenyl-L-cysteine sulphoxide (PRENCSO) by alliinase. The polypeptide is Lachrymatory-factor synthase (Allium cepa (Onion)).